The following is a 1561-amino-acid chain: ABC-type transporter phomO' (1561 aa).

Transmembrane regions (helical) follow at residues 34–54 (LYFEEVVFVLVPSCVFILLAA), 110–130 (CTAGLLVTLHVAGLILLCTTV), 139–159 (SVPASVVAALAFGVVPVLAHF), 172–192 (SSSLLVGLFLCVAVLLRAPLV), 202–222 (GSALVAVEIASLVLQLVLIAV), 314–334 (LGLYALAPVIPRLCLAGFTLA), and 358–378 (GLIGATFLIYTGIAVSTGWYW). One can recognise an ABC transmembrane type-1 1 domain in the interval 326–599 (LCLAGFTLAQ…LLQIIPSFGA (274 aa)). N-linked (GlcNAc...) asparagine glycosylation occurs at Asn-384. Helical transmembrane passes span 428 to 448 (LAYAHELWVAPIETAIGTWML), 452 to 472 (VGPPGLVVLGIIGVCLGTSTY), 535 to 555 (LIVGTLLSSYSTATLAPVLVF), and 577 to 597 (LIWISLLASPLIQLLQIIPSF). In terms of domain architecture, ABC transporter 1 spans 645–871 (IHNSSFSYTD…VEDENGDVDN (227 aa)). Asn-647 carries N-linked (GlcNAc...) asparagine glycosylation. 678-685 (GPAGCGKS) lines the ATP pocket. Asn-721 is a glycosylation site (N-linked (GlcNAc...) asparagine). A disordered region spans residues 853–899 (YQFPPSQADVEDENGDVDNGAENTRPRESSHTTEAQSGPPEPKSKPT). 4 helical membrane-spanning segments follow: residues 913–933 (SIGFLNLVLFIGGGIIFAFCL), 969–989 (VLPLIAVAGWVAQLMMLIVPL), 1037–1054 (LFNTAAALLTGIAQVILI), and 1147–1167 (LVLNLVVAGLALVVMGAAVGL). An ABC transmembrane type-1 2 domain is found at 920 to 1209 (VLFIGGGIIF…LLTAWTSLET (290 aa)). N-linked (GlcNAc...) asparagine glycosylation occurs at Asn-1189. The segment covering 1229 to 1238 (DVLVRPDSLD) has biased composition (basic and acidic residues). Residues 1229 to 1298 (DVLVRPDSLD…DVAADGEKHE (70 aa)) are disordered. Over residues 1269–1280 (YDDDDESDENTD) the composition is skewed to acidic residues. In terms of domain architecture, ABC transporter 2 spans 1297 to 1545 (HEATTITTTS…SDIFAFFGRS (249 aa)). 1333 to 1340 (GRTGSGKS) lines the ATP pocket. N-linked (GlcNAc...) asparagine glycosylation occurs at Asn-1496.

This sequence belongs to the ABC transporter superfamily. ABCC family. Conjugate transporter (TC 3.A.1.208) subfamily.

It localises to the membrane. ABC-type transporter; part of the gene cluster that mediates the biosynthesis of the phomopsins, a group of hexapeptide mycotoxins which infects lupins and causes lupinosis disease in livestock. The polypeptide is ABC-type transporter phomO' (Diaporthe leptostromiformis (Lupinosis disease fungus)).